We begin with the raw amino-acid sequence, 276 residues long: MGIRFLRSYTPGTRNRSVSDFNEITINKPEKSLTFSHHRCKGRNHRGIITCRHRGGGHKRLYRQIDFQRDKTKVPAQVLSIEYDPNRNARIALLRYPDGEKRYILHPRGLKIGETVISDVNASIQTGNTLPLRNIPLGTEVHNVEFQPGSGGQLARSAGTLVELLAKEGDFVTLRLPSKEIRLISRHCWATIGQVGHVEAYSIVVGKAGRTRWLGIRPTVRGSVMNPVDHPHGGGEGRAPIGRSRPVTPWGKPALGQKTRKPKKQSNKLILRKRKK.

The disordered stretch occupies residues 221–276 (RGSVMNPVDHPHGGGEGRAPIGRSRPVTPWGKPALGQKTRKPKKQSNKLILRKRKK). Residues 258–276 (KTRKPKKQSNKLILRKRKK) are compositionally biased toward basic residues.

It belongs to the universal ribosomal protein uL2 family. In terms of assembly, part of the 50S ribosomal subunit.

It localises to the plastid. It is found in the chloroplast. The chain is Large ribosomal subunit protein uL2c (rpl2) from Stigeoclonium helveticum (Green alga).